The following is a 1071-amino-acid chain: Fused isobutyryl-CoA mutase (1071 aa).

Residues 12-149 (PVRFVTSAAL…QTCDVDLTGE (138 aa)) form the B12-binding domain. Adenosylcob(III)alamin is bound at residue His-25. The interval 153–400 (VEAVLAGERT…YQHLLELLGA (248 aa)) is GTPase chaperone MeaI. Residue 203–208 (GSGKSS) participates in GTP binding. Residues Ser-207, Val-232, Asp-233, and Asp-246 each contribute to the Mg(2+) site. Arg-249 serves as a coordination point for GTP. Residues Glu-293 and Thr-294 each contribute to the Mg(2+) site. 340-343 (NKFE) provides a ligand contact to GTP. A linker region spans residues 401–558 (RGLPVDEGVL…RSENLPGHFP (158 aa)). Residues Phe-566, Arg-601, Arg-707, Tyr-751, Ser-800, Arg-835, and Lys-840 each contribute to the substrate site. 2 residues coordinate GTP: Glu-952 and Asn-1070.

It belongs to the IcmF family. As to quaternary structure, homodimer. It depends on adenosylcob(III)alamin as a cofactor. Mg(2+) serves as cofactor.

The catalysed reaction is 2-methylpropanoyl-CoA = butanoyl-CoA. The enzyme catalyses GTP + H2O = GDP + phosphate + H(+). Catalyzes the reversible interconversion of isobutyryl-CoA and n-butyryl-CoA, using radical chemistry. Also exhibits GTPase activity, associated with its G-protein domain (MeaI) that functions as a chaperone that assists cofactor delivery and proper holo-enzyme assembly. Does not exhibit methylmalonyl-CoA mutase (MCM) activity. This chain is Fused isobutyryl-CoA mutase, found in Nocardia farcinica (strain IFM 10152).